A 178-amino-acid polypeptide reads, in one-letter code: Interleukin-1 receptor antagonist protein (178 aa).

An N-terminal signal peptide occupies residues 1-26 (MEICWGPYSHLISLLLILLFHSEAAC). A disulfide bond links C92 and C142. An N-linked (GlcNAc...) asparagine glycan is attached at N110.

This sequence belongs to the IL-1 family.

It localises to the secreted. It is found in the cytoplasm. Functionally, anti-inflammatory antagonist of interleukin-1 family of proinflammatory cytokines such as interleukin-1beta/IL1B and interleukin-1alpha/IL1A. Protects from immune dysregulation and uncontrolled systemic inflammation triggered by IL1 for a range of innate stimulatory agents such as pathogens. The chain is Interleukin-1 receptor antagonist protein (Il1rn) from Mus musculus (Mouse).